The following is a 154-amino-acid chain: Acidic phospholipase A2 2 (154 aa).

A signal peptide spans 1-19 (MHPAHLLVPLGVCVSLLGA). Positions 20 to 27 (ARIPPLPL) are excised as a propeptide. 7 disulfide bridges follow: C38–C104, C54–C153, C56–C72, C71–C132, C78–C125, C88–C118, and C111–C123. Positions 55, 57, and 59 each coordinate Ca(2+). H75 is a catalytic residue. D76 lines the Ca(2+) pocket. D126 is a catalytic residue.

Belongs to the phospholipase A2 family. Group I subfamily. D49 sub-subfamily. As to quaternary structure, monomer. The cofactor is Ca(2+). As to expression, expressed by the venom gland.

It localises to the secreted. It carries out the reaction a 1,2-diacyl-sn-glycero-3-phosphocholine + H2O = a 1-acyl-sn-glycero-3-phosphocholine + a fatty acid + H(+). Snake venom phospholipase A2 (PLA2) that shows moderate enzymatic activity and exhibits procoagulant activity. PLA2 catalyzes the calcium-dependent hydrolysis of the 2-acyl groups in 3-sn-phosphoglycerides. The sequence is that of Acidic phospholipase A2 2 from Pseudonaja textilis (Eastern brown snake).